The following is a 220-amino-acid chain: Small ribosomal subunit protein uS2 (220 aa).

Positions Leu-201–Arg-220 are disordered.

Belongs to the universal ribosomal protein uS2 family.

In Staphylothermus marinus (strain ATCC 43588 / DSM 3639 / JCM 9404 / F1), this protein is Small ribosomal subunit protein uS2.